The sequence spans 181 residues: Methanesulfonate monooxygenase hydroxylase subunit beta (181 aa).

It belongs to the bacterial ring-hydroxylating dioxygenase beta subunit family. The MSA monooxygenase system consists of 4 proteins: the 2 subunits of the hydroxylase component (MsmA and MsmB), a ferredoxin (MsmC) and a ferredoxin reductase (MsmD). The hydroxylase component consists of a 3 alpha (MsmA) and 3 beta (MsmB) subunits.

The protein resides in the cytoplasm. It catalyses the reaction methanesulfonate + NADH + O2 = sulfite + formaldehyde + NAD(+) + H2O. MSAMO is inhibited by metal chelators (such as bathophenanthroline, bathocuprione, neocuprione, alpha-alpha-dipyridil and sodium EDTA) and by sodium azide, sodium arsenate and potassium cyanide. In terms of biological role, methanesulfonate monooxygenase (MSAMO) mediates the primary degradation of methanesulfonic acid (MSA) to produce formaldehyd and inorganic sulfite by initial hydroxylation of the carbon atom prior to spontaneous cleavage of the unstable hydroxymethanesulfonic acid. MSAMO has a restricted substrate range that includes only the short-chain aliphatic sulfonates (methane- to butanesulfonate) and excludes all larger molecules, such as arylsulfonates and aromatic sulfonates. All MSAMO components are required for enzyme activity. In Methylosulfonomonas methylovora, this protein is Methanesulfonate monooxygenase hydroxylase subunit beta.